Here is a 150-residue protein sequence, read N- to C-terminus: D-aminoacyl-tRNA deacylase (150 aa).

The short motif at 137–138 (GP) is the Gly-cisPro motif, important for rejection of L-amino acids element.

This sequence belongs to the DTD family. Homodimer.

The protein resides in the cytoplasm. The catalysed reaction is glycyl-tRNA(Ala) + H2O = tRNA(Ala) + glycine + H(+). It catalyses the reaction a D-aminoacyl-tRNA + H2O = a tRNA + a D-alpha-amino acid + H(+). Its function is as follows. An aminoacyl-tRNA editing enzyme that deacylates mischarged D-aminoacyl-tRNAs. Also deacylates mischarged glycyl-tRNA(Ala), protecting cells against glycine mischarging by AlaRS. Acts via tRNA-based rather than protein-based catalysis; rejects L-amino acids rather than detecting D-amino acids in the active site. By recycling D-aminoacyl-tRNA to D-amino acids and free tRNA molecules, this enzyme counteracts the toxicity associated with the formation of D-aminoacyl-tRNA entities in vivo and helps enforce protein L-homochirality. This is D-aminoacyl-tRNA deacylase from Listeria innocua serovar 6a (strain ATCC BAA-680 / CLIP 11262).